A 131-amino-acid chain; its full sequence is Phosphoribosyl-AMP cyclohydrolase (131 aa).

Residue D78 participates in Mg(2+) binding. C79 is a Zn(2+) binding site. 2 residues coordinate Mg(2+): D80 and D82. C96 and C103 together coordinate Zn(2+).

Belongs to the PRA-CH family. In terms of assembly, homodimer. Mg(2+) serves as cofactor. Requires Zn(2+) as cofactor.

The protein resides in the cytoplasm. The enzyme catalyses 1-(5-phospho-beta-D-ribosyl)-5'-AMP + H2O = 1-(5-phospho-beta-D-ribosyl)-5-[(5-phospho-beta-D-ribosylamino)methylideneamino]imidazole-4-carboxamide. Its pathway is amino-acid biosynthesis; L-histidine biosynthesis; L-histidine from 5-phospho-alpha-D-ribose 1-diphosphate: step 3/9. In terms of biological role, catalyzes the hydrolysis of the adenine ring of phosphoribosyl-AMP. The chain is Phosphoribosyl-AMP cyclohydrolase from Thioalkalivibrio sulfidiphilus (strain HL-EbGR7).